Reading from the N-terminus, the 372-residue chain is Glutamate 5-kinase (372 aa).

An ATP-binding site is contributed by K14. The substrate site is built by S54, D141, and N153. ATP is bound at residue 173–174; that stretch reads TD. One can recognise a PUA domain in the interval 280–358; that stretch reads RGRVVIDGGA…SEIESVLGHL (79 aa).

The protein belongs to the glutamate 5-kinase family.

It localises to the cytoplasm. It carries out the reaction L-glutamate + ATP = L-glutamyl 5-phosphate + ADP. It functions in the pathway amino-acid biosynthesis; L-proline biosynthesis; L-glutamate 5-semialdehyde from L-glutamate: step 1/2. Its function is as follows. Catalyzes the transfer of a phosphate group to glutamate to form L-glutamate 5-phosphate. This Cupriavidus taiwanensis (strain DSM 17343 / BCRC 17206 / CCUG 44338 / CIP 107171 / LMG 19424 / R1) (Ralstonia taiwanensis (strain LMG 19424)) protein is Glutamate 5-kinase.